The sequence spans 95 residues: Co-chaperonin GroES (95 aa).

Belongs to the GroES chaperonin family. Heptamer of 7 subunits arranged in a ring. Interacts with the chaperonin GroEL.

The protein localises to the cytoplasm. Its function is as follows. Together with the chaperonin GroEL, plays an essential role in assisting protein folding. The GroEL-GroES system forms a nano-cage that allows encapsulation of the non-native substrate proteins and provides a physical environment optimized to promote and accelerate protein folding. GroES binds to the apical surface of the GroEL ring, thereby capping the opening of the GroEL channel. The protein is Co-chaperonin GroES of Desulfotalea psychrophila (strain LSv54 / DSM 12343).